A 153-amino-acid chain; its full sequence is UPF0260 protein YcgN (153 aa).

This sequence belongs to the UPF0260 family.

In Salmonella dublin (strain CT_02021853), this protein is UPF0260 protein YcgN.